Reading from the N-terminus, the 56-residue chain is MYFEIYKDAKGEYRWRLKAANHEIIAQGEGYTSKQNCQHAVDLLKSTTAATPVKEV.

Belongs to the UPF0339 family.

The polypeptide is UPF0339 protein NMA1193/NMA1859 (Neisseria meningitidis serogroup A / serotype 4A (strain DSM 15465 / Z2491)).